Here is an 82-residue protein sequence, read N- to C-terminus: Small ribosomal subunit protein bS16 (82 aa).

It belongs to the bacterial ribosomal protein bS16 family.

This chain is Small ribosomal subunit protein bS16, found in Elusimicrobium minutum (strain Pei191).